A 423-amino-acid polypeptide reads, in one-letter code: Adenylosuccinate synthetase (423 aa).

Residues 12 to 18 (GDEGKGK) and 40 to 42 (GHT) each bind GTP. The active-site Proton acceptor is the aspartate 13. Mg(2+) contacts are provided by aspartate 13 and glycine 40. IMP-binding positions include 13–16 (DEGK), 38–41 (NAGH), threonine 129, arginine 143, glutamine 221, threonine 236, and arginine 300. Histidine 41 acts as the Proton donor in catalysis. 296-302 (AVTGRER) serves as a coordination point for substrate. Residues arginine 302, 328–330 (KSD), and 408–410 (SVG) contribute to the GTP site.

It belongs to the adenylosuccinate synthetase family. Homodimer. Mg(2+) is required as a cofactor.

The protein localises to the cytoplasm. The enzyme catalyses IMP + L-aspartate + GTP = N(6)-(1,2-dicarboxyethyl)-AMP + GDP + phosphate + 2 H(+). It functions in the pathway purine metabolism; AMP biosynthesis via de novo pathway; AMP from IMP: step 1/2. Its function is as follows. Plays an important role in the de novo pathway of purine nucleotide biosynthesis. Catalyzes the first committed step in the biosynthesis of AMP from IMP. The chain is Adenylosuccinate synthetase from Phocaeicola vulgatus (strain ATCC 8482 / DSM 1447 / JCM 5826 / CCUG 4940 / NBRC 14291 / NCTC 11154) (Bacteroides vulgatus).